A 51-amino-acid chain; its full sequence is Large ribosomal subunit protein eL39 (51 aa).

This sequence belongs to the eukaryotic ribosomal protein eL39 family.

The polypeptide is Large ribosomal subunit protein eL39 (RpL39) (Drosophila melanogaster (Fruit fly)).